Consider the following 300-residue polypeptide: Estradiol 17-beta-dehydrogenase 11 (300 aa).

The N-terminal stretch at 1–18 (MKILLDLLLLLPLLIVCC) is a signal peptide. 40–67 (LITGAGHGIGRLTAYEFAKLKSKLVLWD) contacts NADP(+). Residue serine 172 coordinates substrate. The active-site Proton acceptor is the tyrosine 185. Lysine 189 contacts NADP(+).

It belongs to the short-chain dehydrogenases/reductases (SDR) family. 17-beta-HSD 3 subfamily.

The protein localises to the endoplasmic reticulum. Its subcellular location is the lipid droplet. The enzyme catalyses 17beta-estradiol + NAD(+) = estrone + NADH + H(+). It catalyses the reaction 17beta-estradiol + NADP(+) = estrone + NADPH + H(+). In terms of biological role, can convert androstan-3-alpha,17-beta-diol (3-alpha-diol) to androsterone in vitro, suggesting that it may participate in androgen metabolism during steroidogenesis. May act by metabolizing compounds that stimulate steroid synthesis and/or by generating metabolites that inhibit it. Has no activity toward DHEA (dehydroepiandrosterone), or A-dione (4-androste-3,17-dione), and only a slight activity toward testosterone to A-dione. The sequence is that of Estradiol 17-beta-dehydrogenase 11 (HSD17B11) from Macaca fascicularis (Crab-eating macaque).